The chain runs to 331 residues: Small ribosomal subunit protein uS2 (331 aa).

Belongs to the universal ribosomal protein uS2 family.

This is Small ribosomal subunit protein uS2 from Bradyrhizobium diazoefficiens (strain JCM 10833 / BCRC 13528 / IAM 13628 / NBRC 14792 / USDA 110).